An 854-amino-acid polypeptide reads, in one-letter code: Valine--tRNA ligase (854 aa).

A 'HIGH' region motif is present at residues Pro46–His56. The 'KMSKS' region motif lies at Lys551–Ser555. Lys554 is a binding site for ATP.

Belongs to the class-I aminoacyl-tRNA synthetase family. ValS type 2 subfamily. In terms of assembly, monomer.

Its subcellular location is the cytoplasm. The enzyme catalyses tRNA(Val) + L-valine + ATP = L-valyl-tRNA(Val) + AMP + diphosphate. Its function is as follows. Catalyzes the attachment of valine to tRNA(Val). As ValRS can inadvertently accommodate and process structurally similar amino acids such as threonine, to avoid such errors, it has a 'posttransfer' editing activity that hydrolyzes mischarged Thr-tRNA(Val) in a tRNA-dependent manner. This is Valine--tRNA ligase from Orientia tsutsugamushi (strain Boryong) (Rickettsia tsutsugamushi).